We begin with the raw amino-acid sequence, 225 residues long: Non-structural protein V (225 aa).

A compositionally biased stretch (polar residues) spans 145-157; that stretch reads SNEPVSSAGSAQD. A disordered region spans residues 145–173; it reads SNEPVSSAGSAQDPNFKRGGANRERARGN. Residues H174, C193, C197, C209, C211, C214, C218, and C221 each coordinate Zn(2+).

It belongs to the paramyxoviruses V protein family. As to quaternary structure, interacts with host IFIH1/MDA5 and DHX58/LGP2. Forms with host DDB1, CUL4A, STAT1 and STAT2 the HPIV2 virus V-dependent complex (VDC); this complex targets host STAT2 to proteasomal degradation.

Its subcellular location is the host nucleus. Its function is as follows. Plays an essential role in the inhibition of host immune response. Prevents the establishment of cellular antiviral state by blocking interferon-alpha/beta (IFN-alpha/beta) production and signaling pathway. Interacts with host IFIH1/MDA5 and DHX58/LGP2 to inhibit the transduction pathway involved in the activation of IFN-beta promoter, thus protecting the virus against cell antiviral state. Efficiently blocks type I IFN signaling following infection by targeting host STAT2 for proteasomal degradation. Also plays a role in viral growth by promoting host RhoA-induced F-actin formation. This is Non-structural protein V (P/V) from Homo sapiens (Human).